The primary structure comprises 276 residues: 2-dehydro-3-deoxyphosphooctonate aldolase (276 aa).

The protein belongs to the KdsA family.

Its subcellular location is the cytoplasm. It carries out the reaction D-arabinose 5-phosphate + phosphoenolpyruvate + H2O = 3-deoxy-alpha-D-manno-2-octulosonate-8-phosphate + phosphate. It functions in the pathway carbohydrate biosynthesis; 3-deoxy-D-manno-octulosonate biosynthesis; 3-deoxy-D-manno-octulosonate from D-ribulose 5-phosphate: step 2/3. It participates in bacterial outer membrane biogenesis; lipopolysaccharide biosynthesis. The protein is 2-dehydro-3-deoxyphosphooctonate aldolase of Xanthomonas oryzae pv. oryzae (strain MAFF 311018).